We begin with the raw amino-acid sequence, 570 residues long: Keratin, type I cytoskeletal 10 (570 aa).

Over residues 1–16 (MSVLYSSSSKQFSSSR) the composition is skewed to low complexity. Residues 1-29 (MSVLYSSSSKQFSSSRSGGGGGGGSVRVS) form a disordered region. A head region spans residues 1–143 (MSVLYSSSSK…GDGGSLLSGN (143 aa)). A phosphoserine mark is found at S15 and S17. R32 carries the asymmetric dimethylarginine; alternate modification. R32 carries the post-translational modification Omega-N-methylarginine; alternate. Residues S34, S45, S48, and S168 each carry the phosphoserine modification. The coil 1A stretch occupies residues 144 to 179 (GRVTMQNLNDRLASYMDKVRALEESNYELEGKIKEW). The 315-residue stretch at 144–458 (GRVTMQNLND…SLLEGEGSSS (315 aa)) folds into the IF rod domain. Residues 180–200 (YEKHGNSSQREPRDYSKYYKT) are linker 1. The interval 201 to 292 (IEDLKGQILT…KNHEEEMRDL (92 aa)) is coil 1B. Residues 293–315 (QNVSTGDVNVEMNAAPGVDLTQL) form a linker 12 region. The interval 316–454 (LNNMRNQYEQ…QTYRSLLEGE (139 aa)) is coil 2. The segment at 451–570 (LEGEGSSSGG…GDQSSKGPRY (120 aa)) is disordered. The tail stretch occupies residues 455-570 (GSSSGGGGGR…GDQSSKGPRY (116 aa)). Positions 456-562 (SSSGGGGGRR…GGFKSSGGGD (107 aa)) are enriched in gly residues.

Belongs to the intermediate filament family. As to quaternary structure, (Microbial infection) Interacts (via C-terminal tail domain) with the S.aureus clumping factor, clfB; this interaction probably mediates S.aureus attachment to the highly keratinized squamous epithelial cells from the nasal cavity. Heterotetramer of two type I and two type II keratins. Heterodimer with KRT1. Two heterodimers of KRT1 and KRT10 form a heterotetramer. The KRT10 subunit in the heterotetramer is probably disulfide-linked. Interacts with PLEC isoform 1C, when in a heterodimer with KRT1. In terms of assembly, (Microbial infection) Interacts (via the C-terminal tail domain) with S.pneumoniae serine-rich repeat protein PsrP; this interaction probably mediates S.pneumoniae adherence to lung tissue and subsequent pathogenesis. Expressed in the suprabasal layers of the epidermis throughout the entire sole (at protein level). Expressed in the infundibular regions of the ear, the interscale regions of the tail, and the interfollicular epidermis of the back. Expressed in lung tissue from young mice (at protein level).

It is found in the secreted. Its subcellular location is the extracellular space. The protein localises to the cell surface. The protein resides in the cytoplasm. In terms of biological role, plays a role in the establishment of the epidermal barrier on plantar skin. Involved in the maintenance of cell layer development and keratin filament bundles in suprabasal cells of the epithelium. Its function is as follows. (Microbial infection) Acts as a mediator of S.aureus adherence to desquamated nasal epithelial cells via clfB, and hence may play a role in nasal colonization. Functionally, (Microbial infection) Binds S.pneumoniae PsrP, mediating adherence of the bacteria to lung cell lines. In Mus musculus (Mouse), this protein is Keratin, type I cytoskeletal 10 (Krt10).